The chain runs to 76 residues: Putative membrane protein insertion efficiency factor (76 aa).

This sequence belongs to the UPF0161 family.

It localises to the cell inner membrane. In terms of biological role, could be involved in insertion of integral membrane proteins into the membrane. The protein is Putative membrane protein insertion efficiency factor of Porphyromonas gingivalis (strain ATCC 33277 / DSM 20709 / CIP 103683 / JCM 12257 / NCTC 11834 / 2561).